A 196-amino-acid chain; its full sequence is Recombination protein RecR (196 aa).

The C4-type zinc finger occupies 57-72 (CERCNTFTEAPVCSTC). One can recognise a Toprim domain in the interval 80-175 (RQLCVVETPA…SVTRLARGVP (96 aa)).

This sequence belongs to the RecR family.

In terms of biological role, may play a role in DNA repair. It seems to be involved in an RecBC-independent recombinational process of DNA repair. It may act with RecF and RecO. This chain is Recombination protein RecR, found in Methylibium petroleiphilum (strain ATCC BAA-1232 / LMG 22953 / PM1).